The following is a 443-amino-acid chain: Probable D-serine dehydratase (443 aa).

Lysine 118 is subject to N6-(pyridoxal phosphate)lysine.

The protein belongs to the serine/threonine dehydratase family. DsdA subfamily. It depends on pyridoxal 5'-phosphate as a cofactor.

The enzyme catalyses D-serine = pyruvate + NH4(+). The chain is Probable D-serine dehydratase from Colwellia psychrerythraea (strain 34H / ATCC BAA-681) (Vibrio psychroerythus).